The chain runs to 108 residues: Large ribosomal subunit protein uL24 (108 aa).

Belongs to the universal ribosomal protein uL24 family. Part of the 50S ribosomal subunit.

In terms of biological role, one of two assembly initiator proteins, it binds directly to the 5'-end of the 23S rRNA, where it nucleates assembly of the 50S subunit. Functionally, one of the proteins that surrounds the polypeptide exit tunnel on the outside of the subunit. In Mycoplasma mycoides subsp. mycoides SC (strain CCUG 32753 / NCTC 10114 / PG1), this protein is Large ribosomal subunit protein uL24.